A 200-amino-acid chain; its full sequence is Recombination protein RecR (200 aa).

A C4-type zinc finger spans residues 58 to 73; sequence CSICGNITEDDPCPIC. Residues 81–177 form the Toprim domain; sequence SQILVVEQSQ…KVTRLAHGLS (97 aa).

It belongs to the RecR family.

May play a role in DNA repair. It seems to be involved in an RecBC-independent recombinational process of DNA repair. It may act with RecF and RecO. This chain is Recombination protein RecR, found in Limosilactobacillus reuteri (strain DSM 20016) (Lactobacillus reuteri).